The sequence spans 118 residues: Small ribosomal subunit protein uS13 (118 aa).

Residues 93–118 (RGLPVRGQRTKTNARTRKGPRKPIRK) form a disordered region.

It belongs to the universal ribosomal protein uS13 family. Part of the 30S ribosomal subunit. Forms a loose heterodimer with protein S19. Forms two bridges to the 50S subunit in the 70S ribosome.

In terms of biological role, located at the top of the head of the 30S subunit, it contacts several helices of the 16S rRNA. In the 70S ribosome it contacts the 23S rRNA (bridge B1a) and protein L5 of the 50S subunit (bridge B1b), connecting the 2 subunits; these bridges are implicated in subunit movement. Contacts the tRNAs in the A and P-sites. The protein is Small ribosomal subunit protein uS13 of Pseudomonas syringae pv. tomato (strain ATCC BAA-871 / DC3000).